The primary structure comprises 122 residues: Small ribosomal subunit protein bS6 (122 aa).

The segment at 97–122 (TAPSPMMKAVQKEDAAKSHRAEAPAA) is disordered. The segment covering 106-122 (VQKEDAAKSHRAEAPAA) has biased composition (basic and acidic residues).

This sequence belongs to the bacterial ribosomal protein bS6 family.

Its function is as follows. Binds together with bS18 to 16S ribosomal RNA. The polypeptide is Small ribosomal subunit protein bS6 (Janthinobacterium sp. (strain Marseille) (Minibacterium massiliensis)).